A 1153-amino-acid chain; its full sequence is MELNAYIGRAGTGKSKAIIEEIKEKMKQDPLGDPIVLIAPTQNTFQLEQAFVNDKTLNGSLRTEVLHFERLSYRVFQEVGGLMEQQLSKAGTEMMIYDIIQQHQSELRLYQSQVKYYGFSEKLYEQIQDFKKYAVSPQQLETYIAENNLQTRTKHKLQDIALVYKHLEDRINGEYVSTEDSLQRFIEMMDQSEWLKRAEIYIDGFHNFSTLEYQIIQSLVKYAKKVTIVLTTDGDRDLFSLFRKPSESLTHIEEIANNLNIQLHSRQFLDVQRFIHNDLKHLEQNFNALQFEPIPTEGNVEILEASGMREEINEVARRILRENREQGRRFQDIAILYRDESYAYLMESILPQYDIPYNIDVKSSMTHHPIMEMIRSLIEVIQTGWQFDPLMRLFKTNILTKKFKDSQYLIDILENFVLERGIYGKRWIDDKYFDIEQFRKMGLKRQPLTDEERETFERVIQLKNDVMKKVMLFEEKINNASTAIAFATAFYEAMEAFDLPSQLMTDRDTLDVNGEHKKAEEIDQIWNGLIQILDDLVTVFDDQSMSKTRFLELFDIGLEQLEFIMIPQTLDQVSIGTMDLAKVDNKQHVYLVGANDGVLPQTVTASSLITDEEKKYFQEQSSIELSPTADILQMDEAFVCYIAMTRSRAHVTFSYALMGASGDVKEPSPFLHQIQQLYTNLEVQNIHHQHQAEPLRLMEHPHQTKIALFESLKAWLDDELVAETWLDTYQVMRNDTRLNDGLTYLLSALTYDNQTVQLNPSLSKALYGSTINASVSRFEGYQACPFKHFASHGLRLNERTKYKLENFDLGDIFHRVLKFISEKVNGDFKNLNPKQIHKLTTEALSEILPEVQFNLLNSTAYYRYLSQRIGAIVETTLTALKYQGSHTKFTPQRFEASFRRKPKDQSELLATPLQTKQGIPINIRGQIDRIDTYQQGDESFVNIIDYKSSKYSGTLDLTKVYYGLQMQMMTYMDIVLQNKSRLGLTDMTKPGGLLYFHVHEPRIKLAWNQLSEDKRDTEFINSFKLSGLLNSATSVLDAFDTRLEPSYNSDIVPLGLKKDGGIKSNSKVADEQTIYKLIKHNKQNFIETASNIMDGHTEVAPMKYNQTLPCDFCNYKSVCHVDGMIDSKRYRTVDESINPLEAIQDVDLESEGE.

Residues 1–289 (MELNAYIGRA…KHLEQNFNAL (289 aa)) form the UvrD-like helicase ATP-binding domain. 8-15 (GRAGTGKS) serves as a coordination point for ATP. A UvrD-like helicase C-terminal domain is found at 269–583 (LDVQRFIHND…SIGTMDLAKV (315 aa)). [4Fe-4S] cluster contacts are provided by Cys-784, Cys-1110, Cys-1113, and Cys-1119.

It belongs to the helicase family. AddB/RexB type 1 subfamily. As to quaternary structure, heterodimer of AddA and AddB. Mg(2+) is required as a cofactor. It depends on [4Fe-4S] cluster as a cofactor.

Functionally, the heterodimer acts as both an ATP-dependent DNA helicase and an ATP-dependent, dual-direction single-stranded exonuclease. Recognizes the chi site generating a DNA molecule suitable for the initiation of homologous recombination. The AddB subunit has 5' -&gt; 3' nuclease activity but not helicase activity. This is ATP-dependent helicase/deoxyribonuclease subunit B from Staphylococcus saprophyticus subsp. saprophyticus (strain ATCC 15305 / DSM 20229 / NCIMB 8711 / NCTC 7292 / S-41).